The following is a 365-amino-acid chain: 1-acyl-sn-glycerol-3-phosphate acyltransferase epsilon (365 aa).

Residues 15-35 (LLPSVLLLGSAPTYLLAWTLW) form a helical membrane-spanning segment. An HXXXXD motif motif is present at residues 93-98 (HQSTVD). A helical membrane pass occupies residues 345-365 (LYMGTWLYGTLLGCLWFVIKA).

This sequence belongs to the 1-acyl-sn-glycerol-3-phosphate acyltransferase family. Widely expressed.

It localises to the endoplasmic reticulum membrane. The protein resides in the nucleus envelope. The protein localises to the mitochondrion. The enzyme catalyses a 1-acyl-sn-glycero-3-phosphate + an acyl-CoA = a 1,2-diacyl-sn-glycero-3-phosphate + CoA. It carries out the reaction 1-(9Z-octadecenoyl)-sn-glycero-3-phosphate + tetradecanoyl-CoA = 1-(9Z)-octadecenoyl-2-tetradecanoyl-sn-glycero-3-phosphate + CoA. The catalysed reaction is pentadecanoyl-CoA + 1-(9Z-octadecenoyl)-sn-glycero-3-phosphate = 1-(9Z)-octadecenoyl-2-pentadecanoyl-sn-glycero-3-phosphate + CoA. It catalyses the reaction 1-(9Z-octadecenoyl)-sn-glycero-3-phosphate + octadecanoyl-CoA = 1-(9Z-octadecenoyl)-2-octadecanoyl-sn-glycero-3-phosphate + CoA. The enzyme catalyses nonadecanoyl-CoA + 1-(9Z-octadecenoyl)-sn-glycero-3-phosphate = 1-(9Z)-octadecenoyl-2-nonadecanoyl-sn-glycero-3-phosphate + CoA. It carries out the reaction 1-(9Z-octadecenoyl)-sn-glycero-3-phosphoethanolamine + (9Z)-octadecenoyl-CoA = 1,2-di-(9Z-octadecenoyl)-sn-glycero-3-phosphoethanolamine + CoA. The catalysed reaction is 1-(9Z-octadecenoyl)-sn-glycero-3-phosphocholine + (9Z)-octadecenoyl-CoA = 1,2-di-(9Z-octadecenoyl)-sn-glycero-3-phosphocholine + CoA. It catalyses the reaction 1-(9Z-octadecenoyl)-sn-glycero-3-phospho-(1D-myo-inositol) + (5Z,8Z,11Z,14Z)-eicosatetraenoyl-CoA = 1-(9Z-octadecenoyl)-2-(5Z,8Z,11Z,14Z-eicosatetraenoyl)-sn-glycero-3-phospho-1D-myo-inositol + CoA. The enzyme catalyses 1-(9Z-octadecenoyl)-sn-glycero-3-phospho-L-serine + (9Z)-octadecenoyl-CoA = 1,2-di-(9Z)-octadecenoyl-sn-glycero-3-phospho-L-serine + CoA. It carries out the reaction 1-(9Z-octadecenoyl)-sn-glycero-3-phospho-L-serine + (5Z,8Z,11Z,14Z)-eicosatetraenoyl-CoA = 1-(9Z-octadecenoyl)-2-(5Z,8Z,11Z,14Z-eicosatetraenoyl)-sn-glycero-3-phospho-L-serine + CoA. The catalysed reaction is 1-hexadecanoyl-sn-glycero-3-phosphate + (9Z)-octadecenoyl-CoA = 1-hexadecanoyl-2-(9Z-octadecenoyl)-sn-glycero-3-phosphate + CoA. It catalyses the reaction 1-heptadecanoyl-sn-glycero-3-phosphate + (9Z)-octadecenoyl-CoA = 1-heptadecanoyl-2-(9Z)-octadecenoyl-sn-glycero-3-phosphate + CoA. The enzyme catalyses 1-(5Z,8Z,11Z,14Z-eicosatetraenoyl)-sn-glycero-3-phosphate + (9Z)-octadecenoyl-CoA = 1-(5Z,8Z,11Z,14Z)-eicosatetraenoyl-2-(9Z)-octadecenoyl-sn-glycero-3-phosphate + CoA. It carries out the reaction 1-octadecanoyl-sn-glycero-3-phosphate + (9Z)-octadecenoyl-CoA = 1-octadecanoyl-2-(9Z-octadecenoyl)-sn-glycero-3-phosphate + CoA. The catalysed reaction is 1-(9Z-octadecenoyl)-sn-glycero-3-phosphate + (5Z,8Z,11Z,14Z)-eicosatetraenoyl-CoA = 1-(9Z)-octadecenoyl-2-(5Z,8Z,11Z,14Z)-eicosatetraenoyl-sn-glycero-3-phosphate + CoA. It catalyses the reaction heptadecanoyl-CoA + 1-(9Z-octadecenoyl)-sn-glycero-3-phosphate = 1-(9Z)-octadecenoyl-2-heptadecanoyl-sn-glycero-3-phosphate + CoA. The enzyme catalyses 1-(9Z-octadecenoyl)-sn-glycero-3-phosphocholine + (5Z,8Z,11Z,14Z)-eicosatetraenoyl-CoA = 1-(9Z)-octadecenoyl-2-(5Z,8Z,11Z,14Z)-icosatetraenoyl-sn-glycero-3-phosphocholine + CoA. It carries out the reaction 1-(9Z-octadecenoyl)-sn-glycero-3-phosphate + (9Z)-octadecenoyl-CoA = 1,2-di-(9Z-octadecenoyl)-sn-glycero-3-phosphate + CoA. The catalysed reaction is 1-(9Z-octadecenoyl)-sn-glycero-3-phosphate + hexadecanoyl-CoA = 1-hexadecanoyl-2-(9Z-octadecenoyl)-sn-glycero-3-phosphate + CoA. It participates in phospholipid metabolism; CDP-diacylglycerol biosynthesis; CDP-diacylglycerol from sn-glycerol 3-phosphate: step 2/3. Its function is as follows. Converts 1-acyl-sn-glycerol-3-phosphate (lysophosphatidic acid or LPA) into 1,2-diacyl-sn-glycerol-3-phosphate (phosphatidic acid or PA) by incorporating an acyl moiety at the sn-2 position of the glycerol backbone. Acts on LPA containing saturated or unsaturated fatty acids C15:0-C20:4 at the sn-1 position using C18:1-CoA as the acyl donor. Also acts on lysophosphatidylethanolamine using oleoyl-CoA, but not arachidonoyl-CoA, and lysophosphatidylinositol using arachidonoyl-CoA, but not oleoyl-CoA. Activity toward lysophosphatidylglycerol not detectable. The chain is 1-acyl-sn-glycerol-3-phosphate acyltransferase epsilon (Agpat5) from Mus musculus (Mouse).